The chain runs to 412 residues: Multifunctional CCA protein (412 aa).

The ATP site is built by Gly-8 and Arg-11. Positions 8 and 11 each coordinate CTP. The Mg(2+) site is built by Glu-21 and Asp-23. ATP-binding residues include Arg-91, Arg-137, and Arg-140. Residues Arg-91, Arg-137, and Arg-140 each contribute to the CTP site. In terms of domain architecture, HD spans 228-329 (CGIHTLMSLQ…WRLLQRLDVL (102 aa)).

It belongs to the tRNA nucleotidyltransferase/poly(A) polymerase family. Bacterial CCA-adding enzyme type 1 subfamily. Monomer. Can also form homodimers and oligomers. Mg(2+) is required as a cofactor. Requires Ni(2+) as cofactor.

The catalysed reaction is a tRNA precursor + 2 CTP + ATP = a tRNA with a 3' CCA end + 3 diphosphate. The enzyme catalyses a tRNA with a 3' CCA end + 2 CTP + ATP = a tRNA with a 3' CCACCA end + 3 diphosphate. Its function is as follows. Catalyzes the addition and repair of the essential 3'-terminal CCA sequence in tRNAs without using a nucleic acid template. Adds these three nucleotides in the order of C, C, and A to the tRNA nucleotide-73, using CTP and ATP as substrates and producing inorganic pyrophosphate. tRNA 3'-terminal CCA addition is required both for tRNA processing and repair. Also involved in tRNA surveillance by mediating tandem CCA addition to generate a CCACCA at the 3' terminus of unstable tRNAs. While stable tRNAs receive only 3'-terminal CCA, unstable tRNAs are marked with CCACCA and rapidly degraded. In Acinetobacter baumannii (strain AB307-0294), this protein is Multifunctional CCA protein.